The sequence spans 308 residues: Transaldolase (308 aa).

Lys-125 (schiff-base intermediate with substrate) is an active-site residue.

Belongs to the transaldolase family. Type 1 subfamily. Homodimer.

Its subcellular location is the cytoplasm. It catalyses the reaction D-sedoheptulose 7-phosphate + D-glyceraldehyde 3-phosphate = D-erythrose 4-phosphate + beta-D-fructose 6-phosphate. Its pathway is carbohydrate degradation; pentose phosphate pathway; D-glyceraldehyde 3-phosphate and beta-D-fructose 6-phosphate from D-ribose 5-phosphate and D-xylulose 5-phosphate (non-oxidative stage): step 2/3. Functionally, transaldolase is important for the balance of metabolites in the pentose-phosphate pathway. This chain is Transaldolase, found in Pseudomonas entomophila (strain L48).